A 386-amino-acid chain; its full sequence is Rhomboid domain-containing protein 3 (386 aa).

5 helical membrane-spanning segments follow: residues 20–40, 58–78, 92–112, 141–161, and 163–183; these read VLML…LVLA, LGHT…TVGW, ASAL…GLGL, GALP…LLSS, and PPFL…AGAF. In terms of domain architecture, UBA spans 324–362; that stretch reads VSSLRLQQLERMGFPTEQAVVALAATGRVEGAVSLLVGG.

It is found in the membrane. This Homo sapiens (Human) protein is Rhomboid domain-containing protein 3 (RHBDD3).